We begin with the raw amino-acid sequence, 71 residues long: Protein SlyX homolog (71 aa).

The protein belongs to the SlyX family.

The chain is Protein SlyX homolog from Rhodopseudomonas palustris (strain HaA2).